Consider the following 183-residue polypeptide: Large ribosomal subunit protein uL6 (183 aa).

Belongs to the universal ribosomal protein uL6 family. Part of the 50S ribosomal subunit.

Functionally, this protein binds to the 23S rRNA, and is important in its secondary structure. It is located near the subunit interface in the base of the L7/L12 stalk, and near the tRNA binding site of the peptidyltransferase center. The protein is Large ribosomal subunit protein uL6 of Moorella thermoacetica (strain ATCC 39073 / JCM 9320).